Here is a 384-residue protein sequence, read N- to C-terminus: Small ribosomal subunit protein mS31 (384 aa).

The transit peptide at Met1–Ser54 directs the protein to the mitochondrion. The interval Thr101–Arg136 is disordered. Positions Thr121–Arg136 are enriched in basic and acidic residues.

The protein belongs to the mitochondrion-specific ribosomal protein mS31 family. In terms of assembly, component of the mitochondrial ribosome small subunit (28S) which comprises a 12S rRNA and about 30 distinct proteins.

It is found in the mitochondrion. This chain is Small ribosomal subunit protein mS31 (Mrps31), found in Mus musculus (Mouse).